The following is a 692-amino-acid chain: FMR1-interacting protein NUFIP2 (692 aa).

The interval 1 to 100 is disordered; the sequence is MEEKPGQPQP…KKTGYGEING (100 aa). 2 stretches are compositionally biased toward basic residues: residues 11–23 and 31–54; these read QHHH…HHHP and SHHH…HHQQ. K79 is covalently cross-linked (Glycyl lysine isopeptide (Lys-Gly) (interchain with G-Cter in SUMO2)). T88 bears the Phosphothreonine mark. Residue K110 forms a Glycyl lysine isopeptide (Lys-Gly) (interchain with G-Cter in SUMO2) linkage. Residues S113 and S114 each carry the phosphoserine modification. Residues K137, K147, K158, and K172 each participate in a glycyl lysine isopeptide (Lys-Gly) (interchain with G-Cter in SUMO2) cross-link. Positions 205 to 233 are disordered; sequence SKGADNDGSGSESGYTTPKKRKARRNSAK. A phosphoserine mark is found at S213 and S215. Phosphotyrosine is present on Y219. Residues T220 and T221 each carry the phosphothreonine modification. A compositionally biased stretch (basic residues) spans 222-231; the sequence is PKKRKARRNS. Glycyl lysine isopeptide (Lys-Gly) (interchain with G-Cter in SUMO2) cross-links involve residues K262 and K281. Disordered stretches follow at residues 277–337 and 369–401; these read KPIW…WTLF and TVQN…SQVP. R291 is modified (omega-N-methylarginine). A Glycyl lysine isopeptide (Lys-Gly) (interchain with G-Cter in SUMO2) cross-link involves residue K293. At S304 the chain carries Phosphoserine. K307 is covalently cross-linked (Glycyl lysine isopeptide (Lys-Gly) (interchain with G-Cter in SUMO2)). Low complexity predominate over residues 371–395; sequence QNSSVSPSSSSSSSSTGETQTQSSS. S376 carries the phosphoserine modification. Residue T569 is modified to Phosphothreonine. A phosphoserine mark is found at S570, S589, S605, and S626. Residue T630 is modified to Phosphothreonine. S634, S649, S652, and S689 each carry phosphoserine.

Interacts with FMR1 (via N-terminus). Interacts with DDX6.

The protein localises to the nucleus. Its subcellular location is the cytoplasm. It is found in the stress granule. Its function is as follows. Binds RNA. The sequence is that of FMR1-interacting protein NUFIP2 (Nufip2) from Mus musculus (Mouse).